Consider the following 325-residue polypeptide: Protease HtpX homolog (325 aa).

A helical transmembrane segment spans residues 20 to 40 (IGYLLGGGGGMMIALVIAVAM). Histidine 130 is a Zn(2+) binding site. Glutamate 131 is a catalytic residue. A Zn(2+)-binding site is contributed by histidine 134. A run of 2 helical transmembrane segments spans residues 145–165 (IVATLAGAISMLGNFAFFLGG) and 173–193 (VMGVVGTLLAMIVAPFGAMIV). Residue glutamate 202 coordinates Zn(2+). Residues 286-325 (SAAMTARAAAPSQNSGPWGQRSDNAGGNSNGGSRYRGPWS) are disordered. Over residues 306–325 (RSDNAGGNSNGGSRYRGPWS) the composition is skewed to low complexity.

It belongs to the peptidase M48B family. It depends on Zn(2+) as a cofactor.

It localises to the cell inner membrane. The polypeptide is Protease HtpX homolog (Brucella melitensis biotype 2 (strain ATCC 23457)).